Reading from the N-terminus, the 1330-residue chain is ESX-3 secretion system protein EccC3 (1330 aa).

2 consecutive transmembrane segments (helical) span residues 43-63 (LPYL…ATGM) and 65-85 (VISP…TALY). 3 FtsK domains span residues 456–662 (GEPL…SVSR), 811–1000 (RDPL…RDSN), and 1090–1280 (LAPV…ADSG). Residues 479 to 486 (GMTGSGKS), 829 to 836 (GGPKSGKS), and 1107 to 1114 (GDARSGKT) each bind ATP.

Part of the ESX-3 / type VII secretion system (T7SS), which is composed of cytosolic and membrane components. The ESX-3 membrane complex is composed of EccB3, EccC3, EccD3 and EccE3.

Its subcellular location is the cell inner membrane. In terms of biological role, part of the ESX-3 specialized secretion system, which is important for iron and zinc uptake or homeostasis. This Mycobacterium tuberculosis (strain CDC 1551 / Oshkosh) protein is ESX-3 secretion system protein EccC3.